The sequence spans 199 residues: Small ribosomal subunit protein uS4 (199 aa).

An S4 RNA-binding domain is found at 91-154; that stretch reads SRLDNLVYRM…RGLQLIKDAL (64 aa).

The protein belongs to the universal ribosomal protein uS4 family. In terms of assembly, part of the 30S ribosomal subunit. Contacts protein S5. The interaction surface between S4 and S5 is involved in control of translational fidelity.

In terms of biological role, one of the primary rRNA binding proteins, it binds directly to 16S rRNA where it nucleates assembly of the body of the 30S subunit. With S5 and S12 plays an important role in translational accuracy. This chain is Small ribosomal subunit protein uS4, found in Brevibacillus brevis (strain 47 / JCM 6285 / NBRC 100599).